Here is a 282-residue protein sequence, read N- to C-terminus: Undecaprenyl-diphosphatase (282 aa).

The next 7 membrane-spanning stretches (helical) occupy residues 40 to 60 (GAAF…IYFY), 87 to 107 (MGWM…LFKT), 116 to 136 (LYWI…AEWL), 153 to 173 (IGWK…IPGS), 196 to 216 (FSFL…LYET), 229 to 249 (NLAV…AFLI), and 256 to 276 (STAL…GLIA).

This sequence belongs to the UppP family.

Its subcellular location is the cell inner membrane. The enzyme catalyses di-trans,octa-cis-undecaprenyl diphosphate + H2O = di-trans,octa-cis-undecaprenyl phosphate + phosphate + H(+). Functionally, catalyzes the dephosphorylation of undecaprenyl diphosphate (UPP). Confers resistance to bacitracin. This Chlorobium phaeobacteroides (strain BS1) protein is Undecaprenyl-diphosphatase.